The chain runs to 309 residues: Sulfate adenylyltransferase subunit 2 (309 aa).

It belongs to the PAPS reductase family. CysD subfamily. As to quaternary structure, heterodimer composed of CysD, the smaller subunit, and CysN.

It carries out the reaction sulfate + ATP + H(+) = adenosine 5'-phosphosulfate + diphosphate. It participates in sulfur metabolism; hydrogen sulfide biosynthesis; sulfite from sulfate: step 1/3. Its function is as follows. With CysN forms the ATP sulfurylase (ATPS) that catalyzes the adenylation of sulfate producing adenosine 5'-phosphosulfate (APS) and diphosphate, the first enzymatic step in sulfur assimilation pathway. APS synthesis involves the formation of a high-energy phosphoric-sulfuric acid anhydride bond driven by GTP hydrolysis by CysN coupled to ATP hydrolysis by CysD. The sequence is that of Sulfate adenylyltransferase subunit 2 from Aeromonas salmonicida (strain A449).